Reading from the N-terminus, the 372-residue chain is Queuine tRNA-ribosyltransferase (372 aa).

Asp89 (proton acceptor) is an active-site residue. Substrate is bound by residues 89-93 (DSGGF), Asp161, and Gly232. An RNA binding region spans residues 262-268 (GIGDLPS). Asp281 (nucleophile) is an active-site residue. The segment at 286–290 (TKAAR) is RNA binding; important for wobble base 34 recognition. Cys319, Cys321, Cys324, and His351 together coordinate Zn(2+).

This sequence belongs to the queuine tRNA-ribosyltransferase family. Homodimer. Within each dimer, one monomer is responsible for RNA recognition and catalysis, while the other monomer binds to the replacement base PreQ1. Requires Zn(2+) as cofactor.

The catalysed reaction is 7-aminomethyl-7-carbaguanine + guanosine(34) in tRNA = 7-aminomethyl-7-carbaguanosine(34) in tRNA + guanine. It functions in the pathway tRNA modification; tRNA-queuosine biosynthesis. Functionally, catalyzes the base-exchange of a guanine (G) residue with the queuine precursor 7-aminomethyl-7-deazaguanine (PreQ1) at position 34 (anticodon wobble position) in tRNAs with GU(N) anticodons (tRNA-Asp, -Asn, -His and -Tyr). Catalysis occurs through a double-displacement mechanism. The nucleophile active site attacks the C1' of nucleotide 34 to detach the guanine base from the RNA, forming a covalent enzyme-RNA intermediate. The proton acceptor active site deprotonates the incoming PreQ1, allowing a nucleophilic attack on the C1' of the ribose to form the product. After dissociation, two additional enzymatic reactions on the tRNA convert PreQ1 to queuine (Q), resulting in the hypermodified nucleoside queuosine (7-(((4,5-cis-dihydroxy-2-cyclopenten-1-yl)amino)methyl)-7-deazaguanosine). In Chlamydia caviae (strain ATCC VR-813 / DSM 19441 / 03DC25 / GPIC) (Chlamydophila caviae), this protein is Queuine tRNA-ribosyltransferase.